The primary structure comprises 223 residues: Alpha-S2-casein (223 aa).

Positions Met1–Ala15 are cleaved as a signal peptide. Residues Ser23, Ser24, Ser25, Ser72, Ser73, Ser74, Ser77, Ser145, Ser147, Ser151, and Ser159 each carry the phosphoserine modification. A repeat spans Ser77 to Arg141. Positions Ser159–Leu223 form a repeat.

The protein belongs to the alpha-casein family. Mammary gland specific. Secreted in milk.

The protein resides in the secreted. Its function is as follows. Important role in the capacity of milk to transport calcium phosphate. The polypeptide is Alpha-S2-casein (CSN1S2) (Capra hircus (Goat)).